The chain runs to 544 residues: Ceramide glucosyltransferase (544 aa).

Topologically, residues Met-1–Tyr-15 are lumenal. Residues Phe-16–Leu-36 traverse the membrane as a helical segment. Over Phe-37–Glu-427 the chain is Cytoplasmic. A short sequence motif (D1) is located at residue Asp-109. A short sequence motif (D2) is located at residue Asp-171. A short sequence motif (D3) is located at residue Asp-364. Residue Asp-364 is the Proton acceptor of the active site. A (Q/R)XXRW motif is present at residues Arg-404–Trp-408. A helical membrane pass occupies residues Ser-428–Phe-448. Residues Asn-449–Tyr-451 are Lumenal-facing. The chain crosses the membrane as a helical span at residues Trp-452–Ile-472. Topologically, residues Asn-473–Gln-501 are cytoplasmic. A helical transmembrane segment spans residues Trp-502–Ile-522. Residues Gly-523 to Met-544 are Lumenal-facing.

The protein belongs to the glycosyltransferase 2 family.

The protein localises to the golgi apparatus membrane. It carries out the reaction an N-acylsphing-4-enine + UDP-alpha-D-glucose = a beta-D-glucosyl-(1&lt;-&gt;1')-N-acylsphing-4-enine + UDP + H(+). It participates in lipid metabolism; sphingolipid metabolism. Functionally, catalyzes the final step in the biosynthesis of the membrane lipid glucosylceramide (GluCer), the transfer of glucose to ceramide. Glucosylceramides play important roles in growth, differentiation and pathogenicity. The chain is Ceramide glucosyltransferase from Candida albicans (strain SC5314 / ATCC MYA-2876) (Yeast).